Reading from the N-terminus, the 351-residue chain is Regulator of V-ATPase in vacuolar membrane protein 2 (351 aa).

As to quaternary structure, component of the RAVE complex composed of RAV1, RAV2 and CBF3D/SKP1. Within the complex, it interacts directly with RAV1 and CBF3D. Interacts with the V-ATPase V1 subunits VMA1, VMA2 and VMA8.

It is found in the cytoplasm. The protein resides in the early endosome membrane. Functionally, component of the RAVE complex, which is required for stable assembly of the vacuolar ATPase complex V-ATPase under many conditions. May be required for transport between the early endosome and the late endosome/prevacuolar compartment (PVC). This chain is Regulator of V-ATPase in vacuolar membrane protein 2 (RAV2), found in Saccharomyces cerevisiae (strain ATCC 204508 / S288c) (Baker's yeast).